The chain runs to 132 residues: Small ribosomal subunit protein uS8 (132 aa).

This sequence belongs to the universal ribosomal protein uS8 family. As to quaternary structure, part of the 30S ribosomal subunit. Contacts proteins S5 and S12.

In terms of biological role, one of the primary rRNA binding proteins, it binds directly to 16S rRNA central domain where it helps coordinate assembly of the platform of the 30S subunit. In Clostridium kluyveri (strain NBRC 12016), this protein is Small ribosomal subunit protein uS8.